A 205-amino-acid chain; its full sequence is MTTDFLFPKISDCSYVSCYCEENVWKLCEQVKRTRPEELSKCYAVFVSNEGRTVPLWRQKAGRGDDQVVIWDYHVFFIHNPLLNRCLVFDLDTTLPFPTYFHKYVTETFRSDLALRPEHHRFFRVIPADTYLIEFSSDRRHMRRPDGSWIKPPPSYPPILSNSNMHCLGDFICMSAGKGPGSVYSLSEFVQNFYKSPHVMAQNNK.

Catalysis depends on residues cysteine 20, histidine 74, and aspartate 90.

Belongs to the NTAQ1 family. Monomer.

It carries out the reaction N-terminal L-glutaminyl-[protein] + H2O = N-terminal L-glutamyl-[protein] + NH4(+). In terms of biological role, mediates the side-chain deamidation of N-terminal glutamine residues to glutamate, an important step in N-end rule pathway of protein degradation. Conversion of the resulting N-terminal glutamine to glutamate renders the protein susceptible to arginylation, polyubiquitination and degradation as specified by the N-end rule. Does not act on substrates with internal or C-terminal glutamine and does not act on non-glutamine residues in any position. The chain is Protein N-terminal glutamine amidohydrolase (tun) from Drosophila melanogaster (Fruit fly).